The sequence spans 372 residues: 4-hydroxy-3-methylbut-2-en-1-yl diphosphate synthase (flavodoxin) (372 aa).

Residues Cys-270, Cys-273, Cys-305, and Glu-312 each coordinate [4Fe-4S] cluster.

It belongs to the IspG family. Requires [4Fe-4S] cluster as cofactor.

It catalyses the reaction (2E)-4-hydroxy-3-methylbut-2-enyl diphosphate + oxidized [flavodoxin] + H2O + 2 H(+) = 2-C-methyl-D-erythritol 2,4-cyclic diphosphate + reduced [flavodoxin]. It participates in isoprenoid biosynthesis; isopentenyl diphosphate biosynthesis via DXP pathway; isopentenyl diphosphate from 1-deoxy-D-xylulose 5-phosphate: step 5/6. In terms of biological role, converts 2C-methyl-D-erythritol 2,4-cyclodiphosphate (ME-2,4cPP) into 1-hydroxy-2-methyl-2-(E)-butenyl 4-diphosphate. In Vibrio campbellii (strain ATCC BAA-1116), this protein is 4-hydroxy-3-methylbut-2-en-1-yl diphosphate synthase (flavodoxin).